The following is a 105-amino-acid chain: Met repressor (105 aa).

This sequence belongs to the MetJ family. Homodimer.

Its subcellular location is the cytoplasm. This regulatory protein, when combined with SAM (S-adenosylmethionine) represses the expression of the methionine regulon and of enzymes involved in SAM synthesis. This Klebsiella pneumoniae subsp. pneumoniae (strain ATCC 700721 / MGH 78578) protein is Met repressor.